The primary structure comprises 799 residues: Elongation factor G, mitochondrial (799 aa).

A mitochondrion-targeting transit peptide spans 1–33; the sequence is MRSPSLARLQTRAVFGLTRSARFQPQTLLRQRC. Residues 97–384 form the tr-type G domain; that stretch reads DKCRNIGIAA…GVIDYLPNPA (288 aa). GTP is bound by residues 106 to 113, 182 to 186, and 236 to 239; these read AHIDSGKT, DTPGH, and NKMD.

The protein belongs to the TRAFAC class translation factor GTPase superfamily. Classic translation factor GTPase family. EF-G/EF-2 subfamily.

The protein resides in the mitochondrion. The protein operates within protein biosynthesis; polypeptide chain elongation. In terms of biological role, mitochondrial GTPase that catalyzes the GTP-dependent ribosomal translocation step during translation elongation. During this step, the ribosome changes from the pre-translocational (PRE) to the post-translocational (POST) state as the newly formed A-site-bound peptidyl-tRNA and P-site-bound deacylated tRNA move to the P and E sites, respectively. Catalyzes the coordinated movement of the two tRNA molecules, the mRNA and conformational changes in the ribosome. This chain is Elongation factor G, mitochondrial (mef1), found in Penicillium rubens (strain ATCC 28089 / DSM 1075 / NRRL 1951 / Wisconsin 54-1255) (Penicillium chrysogenum).